A 238-amino-acid polypeptide reads, in one-letter code: uncharacterized protein (238 aa).

The N-terminal stretch at 1 to 28 (MSRNSRGSGRYVFVVLACVFGYTRAVHA) is a signal peptide.

This is an uncharacterized protein from Treponema pallidum (strain Nichols).